We begin with the raw amino-acid sequence, 289 residues long: CRISPR system Cms protein Csm4 (289 aa).

Belongs to the CRISPR-associated Csm4 family. Probably part of the Csm effector complex, that includes Cas10, Csm2, Csm3, Csm4, Csm5 and mature crRNA. Interacts with Cas10 (csm1).

Functionally, CRISPR (clustered regularly interspaced short palindromic repeat) is an adaptive immune system that provides protection against mobile genetic elements (viruses, transposable elements and conjugative plasmids). CRISPR clusters contain spacers, sequences complementary to antecedent mobile elements, and target invading nucleic acids. CRISPR clusters are transcribed and processed into CRISPR RNA (crRNA). The type III-A Csm effector complex binds crRNA and acts as a crRNA-guided RNase, DNase and cyclic oligoadenylate synthase; binding of target RNA cognate to the crRNA is required for all activities. The subunit probably binds to the 5' handle of the crRNA, helping in discrimination between self- and non-self. This chain is CRISPR system Cms protein Csm4, found in Thermococcus onnurineus (strain NA1).